The primary structure comprises 168 residues: Protein-export protein SecB (168 aa).

The disordered stretch occupies residues 1–20 (MTDETAANGENEAGRQSQSS).

The protein belongs to the SecB family. In terms of assembly, homotetramer, a dimer of dimers. One homotetramer interacts with 1 SecA dimer.

The protein localises to the cytoplasm. In terms of biological role, one of the proteins required for the normal export of preproteins out of the cell cytoplasm. It is a molecular chaperone that binds to a subset of precursor proteins, maintaining them in a translocation-competent state. It also specifically binds to its receptor SecA. This is Protein-export protein SecB from Rhodospirillum centenum (strain ATCC 51521 / SW).